The following is a 263-amino-acid chain: Endonuclease NucS (263 aa).

Belongs to the NucS endonuclease family.

It is found in the cytoplasm. Functionally, cleaves both 3' and 5' ssDNA extremities of branched DNA structures. The protein is Endonuclease NucS of Methanocaldococcus jannaschii (strain ATCC 43067 / DSM 2661 / JAL-1 / JCM 10045 / NBRC 100440) (Methanococcus jannaschii).